We begin with the raw amino-acid sequence, 639 residues long: Chaperone protein DnaK (639 aa).

T198 bears the Phosphothreonine; by autocatalysis mark. Residues 597-639 are disordered; that stretch reads AYSAGQSAEGAPHAAGAEASAQSRTDDGVVDADFEEVDEKKGH. Low complexity predominate over residues 603-617; sequence SAEGAPHAAGAEASA. The span at 624-633 shows a compositional bias: acidic residues; it reads GVVDADFEEV.

Belongs to the heat shock protein 70 family.

Acts as a chaperone. The protein is Chaperone protein DnaK of Rhodospirillum rubrum (strain ATCC 11170 / ATH 1.1.1 / DSM 467 / LMG 4362 / NCIMB 8255 / S1).